Here is a 515-residue protein sequence, read N- to C-terminus: Maturase K (515 aa).

The protein belongs to the intron maturase 2 family. MatK subfamily.

It is found in the plastid. Its subcellular location is the chloroplast. Functionally, usually encoded in the trnK tRNA gene intron. Probably assists in splicing its own and other chloroplast group II introns. This chain is Maturase K, found in Sorghum bicolor (Sorghum).